A 164-amino-acid polypeptide reads, in one-letter code: Rhomboid-related protein 1 (164 aa).

4 helical membrane-spanning segments follow: residues 10-30, 32-52, 56-76, and 120-140; these read GFNA…HGVL, ISLL…ITDM, VVGG…NVVM, and PSFM…LTIL. Ser-60 (nucleophile) is an active-site residue. His-125 is a catalytic residue.

It belongs to the peptidase S54 family.

It is found in the membrane. The enzyme catalyses Cleaves type-1 transmembrane domains using a catalytic dyad composed of serine and histidine that are contributed by different transmembrane domains.. May be involved in regulated intramembrane proteolysis and the subsequent release of functional polypeptides from their membrane anchors. The protein is Rhomboid-related protein 1 (Rhbdl1) of Rattus norvegicus (Rat).